The primary structure comprises 200 residues: Shikimate kinase (200 aa).

Residue 41-46 (GVGKSS) participates in ATP binding. Mg(2+) is bound at residue serine 45. Residues aspartate 63, arginine 87, and glycine 109 each contribute to the substrate site. Arginine 147 contributes to the ATP binding site. Arginine 166 serves as a coordination point for substrate.

Belongs to the shikimate kinase family. In terms of assembly, monomer. It depends on Mg(2+) as a cofactor.

Its subcellular location is the cytoplasm. The enzyme catalyses shikimate + ATP = 3-phosphoshikimate + ADP + H(+). The protein operates within metabolic intermediate biosynthesis; chorismate biosynthesis; chorismate from D-erythrose 4-phosphate and phosphoenolpyruvate: step 5/7. In terms of biological role, catalyzes the specific phosphorylation of the 3-hydroxyl group of shikimic acid using ATP as a cosubstrate. This Caulobacter vibrioides (strain NA1000 / CB15N) (Caulobacter crescentus) protein is Shikimate kinase.